Here is an 89-residue protein sequence, read N- to C-terminus: Putative regulatory protein PCC8801_0196 (89 aa).

It belongs to the RemA family.

The polypeptide is Putative regulatory protein PCC8801_0196 (Rippkaea orientalis (strain PCC 8801 / RF-1) (Cyanothece sp. (strain PCC 8801))).